The primary structure comprises 163 residues: Nucleotide-binding protein SACE_6882 (163 aa).

It belongs to the YajQ family.

Functionally, nucleotide-binding protein. This Saccharopolyspora erythraea (strain ATCC 11635 / DSM 40517 / JCM 4748 / NBRC 13426 / NCIMB 8594 / NRRL 2338) protein is Nucleotide-binding protein SACE_6882.